A 492-amino-acid polypeptide reads, in one-letter code: N-succinylglutamate 5-semialdehyde dehydrogenase (492 aa).

Residue 220 to 225 participates in NAD(+) binding; that stretch reads GSANTG. Active-site residues include glutamate 243 and cysteine 277.

Belongs to the aldehyde dehydrogenase family. AstD subfamily.

It carries out the reaction N-succinyl-L-glutamate 5-semialdehyde + NAD(+) + H2O = N-succinyl-L-glutamate + NADH + 2 H(+). Its pathway is amino-acid degradation; L-arginine degradation via AST pathway; L-glutamate and succinate from L-arginine: step 4/5. In terms of biological role, catalyzes the NAD-dependent reduction of succinylglutamate semialdehyde into succinylglutamate. The sequence is that of N-succinylglutamate 5-semialdehyde dehydrogenase from Escherichia coli (strain UTI89 / UPEC).